A 250-amino-acid polypeptide reads, in one-letter code: UPF0736 protein YjbA (250 aa).

Belongs to the UPF0736 family.

The sequence is that of UPF0736 protein YjbA (yjbA) from Bacillus subtilis (strain 168).